A 329-amino-acid chain; its full sequence is Isopenicillin N synthase (329 aa).

Residues Arg-87, Tyr-91, Ser-183, and Tyr-189 each contribute to the isopenicillin N site. Positions 87, 91, 183, 189, 212, and 214 each coordinate N-[(5S)-5-amino-5-carboxypentanoyl]-L-cysteinyl-D-valine. The region spanning 180-286 (SLSSVSLIRY…RLSLPFFLNG (107 aa)) is the Fe2OG dioxygenase domain. His-212, Asp-214, and His-268 together coordinate Fe(2+). Residue Arg-277 participates in 2-oxoglutarate binding. An isopenicillin N-binding site is contributed by Ser-279. An N-[(5S)-5-amino-5-carboxypentanoyl]-L-cysteinyl-D-valine-binding site is contributed by Ser-279.

The protein belongs to the iron/ascorbate-dependent oxidoreductase family. The cofactor is Fe cation. L-ascorbate serves as cofactor.

It catalyses the reaction N-[(5S)-5-amino-5-carboxypentanoyl]-L-cysteinyl-D-valine + O2 = isopenicillin N + 2 H2O. The protein operates within antibiotic biosynthesis; penicillin G biosynthesis; penicillin G from L-alpha-aminoadipate and L-cysteine and L-valine: step 2/3. Its function is as follows. Removes, in the presence of oxygen, 4 hydrogen atoms from delta-L-(alpha-aminoadipyl)-L-cysteinyl-D-valine (ACV) to form the azetidinone and thiazolidine rings of isopenicillin. The protein is Isopenicillin N synthase (pcbC) of Streptomyces clavuligerus.